We begin with the raw amino-acid sequence, 298 residues long: Inosose dehydratase (298 aa).

It belongs to the IolE/MocC family. Requires glutathione as cofactor. Co(2+) is required as a cofactor. The cofactor is Mn(2+).

The enzyme catalyses scyllo-inosose = 3D-3,5/4-trihydroxycyclohexane-1,2-dione + H2O. Catalyzes the dehydration of inosose (2-keto-myo-inositol, 2KMI or 2,4,6/3,5-pentahydroxycyclohexanone) to 3D-(3,5/4)-trihydroxycyclohexane-1,2-dione (D-2,3-diketo-4-deoxy-epi-inositol). In Histophilus somni (strain 129Pt) (Haemophilus somnus), this protein is Inosose dehydratase.